A 311-amino-acid polypeptide reads, in one-letter code: Aspartate carbamoyltransferase catalytic subunit (311 aa).

2 residues coordinate carbamoyl phosphate: R55 and T56. K85 provides a ligand contact to L-aspartate. Carbamoyl phosphate-binding residues include R106, H135, and Q138. R168 and R230 together coordinate L-aspartate. Carbamoyl phosphate is bound by residues L268 and P269.

Belongs to the aspartate/ornithine carbamoyltransferase superfamily. ATCase family. As to quaternary structure, heterododecamer (2C3:3R2) of six catalytic PyrB chains organized as two trimers (C3), and six regulatory PyrI chains organized as three dimers (R2).

It catalyses the reaction carbamoyl phosphate + L-aspartate = N-carbamoyl-L-aspartate + phosphate + H(+). It functions in the pathway pyrimidine metabolism; UMP biosynthesis via de novo pathway; (S)-dihydroorotate from bicarbonate: step 2/3. Its function is as follows. Catalyzes the condensation of carbamoyl phosphate and aspartate to form carbamoyl aspartate and inorganic phosphate, the committed step in the de novo pyrimidine nucleotide biosynthesis pathway. The protein is Aspartate carbamoyltransferase catalytic subunit of Yersinia pseudotuberculosis serotype IB (strain PB1/+).